Consider the following 48-residue polypeptide: Fimbrial assembly protein, serogroup E2 (48 aa).

This Dichelobacter nodosus (Bacteroides nodosus) protein is Fimbrial assembly protein, serogroup E2 (fimB).